Reading from the N-terminus, the 712-residue chain is Polyphosphate kinase (712 aa).

An ATP-binding site is contributed by N49. Residues R398 and R428 each contribute to the Mg(2+) site. Catalysis depends on H458, which acts as the Phosphohistidine intermediate. ATP-binding residues include Y491, R587, and H615.

It belongs to the polyphosphate kinase 1 (PPK1) family. It depends on Mg(2+) as a cofactor. An intermediate of this reaction is the autophosphorylated ppk in which a phosphate is covalently linked to a histidine residue through a N-P bond.

It catalyses the reaction [phosphate](n) + ATP = [phosphate](n+1) + ADP. Its function is as follows. Catalyzes the reversible transfer of the terminal phosphate of ATP to form a long-chain polyphosphate (polyP). The chain is Polyphosphate kinase from Parasynechococcus marenigrum (strain WH8102).